The sequence spans 524 residues: Phenylalanine--tRNA ligase alpha subunit (524 aa).

Residues Thr-362, Tyr-441, and Phe-467 each contribute to the L-phenylalanine site.

The protein belongs to the class-II aminoacyl-tRNA synthetase family. Phe-tRNA synthetase alpha subunit type 2 subfamily. Tetramer of two alpha and two beta subunits. It depends on Mg(2+) as a cofactor.

It localises to the cytoplasm. The catalysed reaction is tRNA(Phe) + L-phenylalanine + ATP = L-phenylalanyl-tRNA(Phe) + AMP + diphosphate + H(+). The protein is Phenylalanine--tRNA ligase alpha subunit of Methanopyrus kandleri (strain AV19 / DSM 6324 / JCM 9639 / NBRC 100938).